The sequence spans 285 residues: Probable endonuclease 4 (285 aa).

His-69, His-109, Glu-145, Asp-179, His-182, His-216, Asp-229, His-231, and Glu-261 together coordinate Zn(2+).

It belongs to the AP endonuclease 2 family. It depends on Zn(2+) as a cofactor.

It carries out the reaction Endonucleolytic cleavage to 5'-phosphooligonucleotide end-products.. Endonuclease IV plays a role in DNA repair. It cleaves phosphodiester bonds at apurinic or apyrimidinic (AP) sites, generating a 3'-hydroxyl group and a 5'-terminal sugar phosphate. The sequence is that of Probable endonuclease 4 from Yersinia pestis bv. Antiqua (strain Antiqua).